We begin with the raw amino-acid sequence, 547 residues long: CTP synthase (547 aa).

The interval 1-269 (MKTKFIFVTG…DQKVAIMLRL (269 aa)) is amidoligase domain. Ser14 contributes to the CTP binding site. Residue Ser14 participates in UTP binding. ATP is bound by residues 15–20 (SLGKGL) and Asp72. Asp72 and Glu143 together coordinate Mg(2+). Residues 150-152 (DIE), 190-195 (KTKPTQ), and Lys226 contribute to the CTP site. UTP-binding positions include 190-195 (KTKPTQ) and Lys226. Positions 294–547 (TVAIVGKYVD…IGAAKKHAKV (254 aa)) constitute a Glutamine amidotransferase type-1 domain. Residue Gly356 participates in L-glutamine binding. Catalysis depends on Cys383, which acts as the Nucleophile; for glutamine hydrolysis. Residues 384 to 387 (LGMQ), Glu407, and Arg475 each bind L-glutamine. Residues His520 and Glu522 contribute to the active site.

The protein belongs to the CTP synthase family. As to quaternary structure, homotetramer.

It carries out the reaction UTP + L-glutamine + ATP + H2O = CTP + L-glutamate + ADP + phosphate + 2 H(+). The catalysed reaction is L-glutamine + H2O = L-glutamate + NH4(+). The enzyme catalyses UTP + NH4(+) + ATP = CTP + ADP + phosphate + 2 H(+). It participates in pyrimidine metabolism; CTP biosynthesis via de novo pathway; CTP from UDP: step 2/2. Allosterically activated by GTP, when glutamine is the substrate; GTP has no effect on the reaction when ammonia is the substrate. The allosteric effector GTP functions by stabilizing the protein conformation that binds the tetrahedral intermediate(s) formed during glutamine hydrolysis. Inhibited by the product CTP, via allosteric rather than competitive inhibition. Catalyzes the ATP-dependent amination of UTP to CTP with either L-glutamine or ammonia as the source of nitrogen. Regulates intracellular CTP levels through interactions with the four ribonucleotide triphosphates. In Desulfovibrio desulfuricans (strain ATCC 27774 / DSM 6949 / MB), this protein is CTP synthase.